We begin with the raw amino-acid sequence, 501 residues long: Suppressor of hairless protein homolog (501 aa).

DNA-binding stretches follow at residues 58–68 (QKSYGNEKRFF), 166–171 (SKPSKK), and 193–198 (RLRSQT). One can recognise an IPT/TIG domain in the interval 356–446 (PVVESLQLNG…YSTSLTFTYT (91 aa)).

It belongs to the Su(H) family. As to quaternary structure, interacts with activated Notch proteins. Forms a ternary complex with nrarp and the intracellular domain (NICD) of notch1. Interacts with rita1, leading to nuclear export, prevent the interaction between rbpj and NICD product and subsequent down-regulation of the Notch signaling pathway.

The protein localises to the nucleus. Its subcellular location is the cytoplasm. In terms of biological role, transcriptional regulator that plays a central role in Notch signaling, a signaling pathway involved in cell-cell communication that regulates a broad spectrum of cell-fate determinations. Acts as a transcriptional repressor when it is not associated with Notch proteins. When associated with some NICD product of Notch proteins (Notch intracellular domain), it acts as a transcriptional activator that activates transcription of Notch target genes. Required for the transcriptional activation of ESR1, suggesting that it is required during primary neurogenesis in embryos. Binds to the oxygen responsive element of COX4I2 and activates its transcription under hypoxia conditions (4% oxygen). The chain is Suppressor of hairless protein homolog (rbpj) from Xenopus laevis (African clawed frog).